A 194-amino-acid polypeptide reads, in one-letter code: Holliday junction branch migration complex subunit RuvA (194 aa).

The segment at 1–63 is domain I; it reads MFEYLKGTVA…EDELSLYGFM (63 aa). The segment at 64–142 is domain II; sequence SIEELDMFQK…KTNVVYDYTL (79 aa). Positions 143-151 are flexible linker; that stretch reads FNDDHKDDD. Residues 151-194 are domain III; sequence DEAVQALMALGYSKLESEKAVEAVRDMSLGTEDVIKRALKWLMK.

This sequence belongs to the RuvA family. In terms of assembly, homotetramer. Forms an RuvA(8)-RuvB(12)-Holliday junction (HJ) complex. HJ DNA is sandwiched between 2 RuvA tetramers; dsDNA enters through RuvA and exits via RuvB. An RuvB hexamer assembles on each DNA strand where it exits the tetramer. Each RuvB hexamer is contacted by two RuvA subunits (via domain III) on 2 adjacent RuvB subunits; this complex drives branch migration. In the full resolvosome a probable DNA-RuvA(4)-RuvB(12)-RuvC(2) complex forms which resolves the HJ.

It is found in the cytoplasm. Its function is as follows. The RuvA-RuvB-RuvC complex processes Holliday junction (HJ) DNA during genetic recombination and DNA repair, while the RuvA-RuvB complex plays an important role in the rescue of blocked DNA replication forks via replication fork reversal (RFR). RuvA specifically binds to HJ cruciform DNA, conferring on it an open structure. The RuvB hexamer acts as an ATP-dependent pump, pulling dsDNA into and through the RuvAB complex. HJ branch migration allows RuvC to scan DNA until it finds its consensus sequence, where it cleaves and resolves the cruciform DNA. The chain is Holliday junction branch migration complex subunit RuvA from Alkaliphilus oremlandii (strain OhILAs) (Clostridium oremlandii (strain OhILAs)).